The primary structure comprises 122 residues: UPF0102 protein BQ09720 (122 aa).

It belongs to the UPF0102 family.

The polypeptide is UPF0102 protein BQ09720 (Bartonella quintana (strain Toulouse) (Rochalimaea quintana)).